Here is a 513-residue protein sequence, read N- to C-terminus: Butyrophilin subfamily 3 member A1 (513 aa).

The N-terminal stretch at 1 to 29 (MKMASFLAFLLLNFRVCLLLLQLLMPHSA) is a signal peptide. Ig-like V-type domains follow at residues 30 to 139 (QFSV…KALV) and 145 to 236 (ALGS…ASIS). The Extracellular portion of the chain corresponds to 30-254 (QFSVLGPSGP…AQRWIAALAG (225 aa)). 2 disulfides stabilise this stretch: Cys-52/Cys-126 and Cys-166/Cys-220. Residue Asn-115 is glycosylated (N-linked (GlcNAc...) asparagine). A helical membrane pass occupies residues 255–271 (TLPVLLLLLGGAGYFLW). At 272-513 (QQQEEKKTQF…EPTALTICPA (242 aa)) the chain is on the cytoplasmic side. Residues 322 to 513 (RGERHSAYNE…EPTALTICPA (192 aa)) form the B30.2/SPRY domain.

This sequence belongs to the immunoglobulin superfamily. BTN/MOG family. As to quaternary structure, homodimer. N-glycosylated. Detected on T-cells, natural killer cells, dendritic cells and macrophages (at protein level). Ubiquitous. Highly expressed in heart, pancreas and lung, Moderately expressed in placenta, liver and muscle.

It is found in the cell membrane. Plays a role in T-cell activation and in the adaptive immune response. Regulates the proliferation of activated T-cells. Regulates the release of cytokines and IFNG by activated T-cells. Mediates the response of T-cells toward infected and transformed cells that are characterized by high levels of phosphorylated metabolites, such as isopentenyl pyrophosphate. The protein is Butyrophilin subfamily 3 member A1 (BTN3A1) of Homo sapiens (Human).